The chain runs to 325 residues: NADH-ubiquinone oxidoreductase chain 1 (325 aa).

Transmembrane regions (helical) follow at residues 5 to 25 (VPAE…FLVL), 79 to 99 (VATF…YGMV), 105 to 125 (IGLL…IIAG), 144 to 164 (MVPY…CVGS), 177 to 197 (IWSG…RLAE), 237 to 257 (ILMS…ILDL), 263 to 283 (IPGS…YIWV), and 302 to 322 (VFLP…VTFQ).

The protein belongs to the complex I subunit 1 family.

It is found in the mitochondrion inner membrane. It carries out the reaction a ubiquinone + NADH + 5 H(+)(in) = a ubiquinol + NAD(+) + 4 H(+)(out). In terms of biological role, core subunit of the mitochondrial membrane respiratory chain NADH dehydrogenase (Complex I) that is believed to belong to the minimal assembly required for catalysis. Complex I functions in the transfer of electrons from NADH to the respiratory chain. The immediate electron acceptor for the enzyme is believed to be ubiquinone. This is NADH-ubiquinone oxidoreductase chain 1 (ND1) from Petunia hybrida (Petunia).